The chain runs to 388 residues: Succinate--CoA ligase [ADP-forming] subunit beta (388 aa).

In terms of domain architecture, ATP-grasp spans 9–244 (KELFRTYGIP…TDEEDPLEVE (236 aa)). ATP is bound by residues lysine 46, 53-55 (GRG), glutamate 99, valine 102, and glutamate 107. The Mg(2+) site is built by asparagine 199 and aspartate 213. Residues asparagine 264 and 321 to 323 (GIL) contribute to the substrate site.

This sequence belongs to the succinate/malate CoA ligase beta subunit family. As to quaternary structure, heterotetramer of two alpha and two beta subunits. Mg(2+) is required as a cofactor.

It carries out the reaction succinate + ATP + CoA = succinyl-CoA + ADP + phosphate. It catalyses the reaction GTP + succinate + CoA = succinyl-CoA + GDP + phosphate. Its pathway is carbohydrate metabolism; tricarboxylic acid cycle; succinate from succinyl-CoA (ligase route): step 1/1. Functionally, succinyl-CoA synthetase functions in the citric acid cycle (TCA), coupling the hydrolysis of succinyl-CoA to the synthesis of either ATP or GTP and thus represents the only step of substrate-level phosphorylation in the TCA. The beta subunit provides nucleotide specificity of the enzyme and binds the substrate succinate, while the binding sites for coenzyme A and phosphate are found in the alpha subunit. This chain is Succinate--CoA ligase [ADP-forming] subunit beta, found in Desulfosudis oleivorans (strain DSM 6200 / JCM 39069 / Hxd3) (Desulfococcus oleovorans).